Consider the following 459-residue polypeptide: Mycothione reductase (459 aa).

Residue 31-39 (EQGTFGGTC) coordinates FAD. Residues Cys-39 and Cys-44 are joined by a disulfide bond. The active-site Proton acceptor is the His-444.

Belongs to the class-I pyridine nucleotide-disulfide oxidoreductase family. In terms of assembly, homodimer. FAD serves as cofactor.

It carries out the reaction 2 mycothiol + NADP(+) = mycothione + NADPH + H(+). It catalyses the reaction 2 mycothiol + NAD(+) = mycothione + NADH + H(+). Functionally, catalyzes the NAD(P)H-dependent reduction of mycothione (the oxidized disulfide form of mycothiol) to mycothiol. This is Mycothione reductase (mtr) from Mycobacterium tuberculosis (strain CDC 1551 / Oshkosh).